The following is a 425-amino-acid chain: Gamma-glutamyl phosphate reductase (425 aa).

The protein belongs to the gamma-glutamyl phosphate reductase family.

The protein localises to the cytoplasm. The catalysed reaction is L-glutamate 5-semialdehyde + phosphate + NADP(+) = L-glutamyl 5-phosphate + NADPH + H(+). The protein operates within amino-acid biosynthesis; L-proline biosynthesis; L-glutamate 5-semialdehyde from L-glutamate: step 2/2. In terms of biological role, catalyzes the NADPH-dependent reduction of L-glutamate 5-phosphate into L-glutamate 5-semialdehyde and phosphate. The product spontaneously undergoes cyclization to form 1-pyrroline-5-carboxylate. In Opitutus terrae (strain DSM 11246 / JCM 15787 / PB90-1), this protein is Gamma-glutamyl phosphate reductase.